Consider the following 119-residue polypeptide: Basic phospholipase A2 acanthin-1 (119 aa).

7 disulfide bridges follow: Cys11–Cys71, Cys27–Cys118, Cys29–Cys45, Cys44–Cys99, Cys51–Cys92, Cys60–Cys85, and Cys78–Cys90. Tyr28, Gly30, and Gly32 together coordinate Ca(2+). His48 is an active-site residue. Asp49 provides a ligand contact to Ca(2+). Asp93 is a catalytic residue.

Ca(2+) is required as a cofactor. As to expression, expressed by the venom gland.

It is found in the secreted. It carries out the reaction a 1,2-diacyl-sn-glycero-3-phosphocholine + H2O = a 1-acyl-sn-glycero-3-phosphocholine + a fatty acid + H(+). Functionally, snake venom phospholipase A2 (PLA2) that potently inhibits ADP-(IC(50)=10 nM) and collagen-induced (IC(50)=7 nM) platelet aggregation when tested on human whole blood. PLA2 catalyzes the calcium-dependent hydrolysis of the 2-acyl groups in 3-sn-phosphoglycerides. The chain is Basic phospholipase A2 acanthin-1 from Acanthophis antarcticus (Common death adder).